Consider the following 319-residue polypeptide: MLVATIFVLVGLVLLIWSADRFVYGASSIARNLNISPMIIGLTIVAMGSSAPEIMVSATAAWQGRLDTAVGNALGSNITNILLVIGATALLKPIAVASMTIKREFPLLILVTLLGYLFLADQSLTRAEGALFLGGFVLFLVLMVYWGKHAPPDDPLLTEYQAELPPPTPTWQATVWLVLGLALLLASSQLLVHGAVTIASHFGMSDLLIGLTIIAIGTSLPELAASLIGILKGEDDLALGNIIGSNIFNILAVLGVGTIIAPGVIDAAAAGRDSYVMMAATLALLLMSLRLGKLRRINRVEGCILLMAFIGYQYLLFSS.

Helical transmembrane passes span 3 to 23 (VATIFVLVGLVLLIWSADRFV), 38 to 58 (MIIGLTIVAMGSSAPEIMVSA), 81 to 101 (ILLVIGATALLKPIAVASMTI), 105 to 125 (FPLLILVTLLGYLFLADQSLT), 127 to 147 (AEGALFLGGFVLFLVLMVYWG), 175 to 195 (VWLVLGLALLLASSQLLVHGA), 208 to 228 (LIGLTIIAIGTSLPELAASLI), 250 to 270 (ILAVLGVGTIIAPGVIDAAAA), 275 to 292 (YVMMAATLALLLMSLRLG), and 297 to 317 (INRVEGCILLMAFIGYQYLLF).

The protein belongs to the Ca(2+):cation antiporter (CaCA) (TC 2.A.19) family.

It is found in the cell membrane. Functionally, confers modest Ca(2+) and Na(+) resistance. The sequence is that of Putative antiporter CaxA (caxA) from Alkalimonas amylolytica.